Here is a 344-residue protein sequence, read N- to C-terminus: Arginine N-succinyltransferase (344 aa).

Leu-125 serves as a coordination point for succinyl-CoA. Catalysis depends on His-229, which acts as the Proton donor.

This sequence belongs to the arginine N-succinyltransferase family.

It carries out the reaction succinyl-CoA + L-arginine = N(2)-succinyl-L-arginine + CoA + H(+). It participates in amino-acid degradation; L-arginine degradation via AST pathway; L-glutamate and succinate from L-arginine: step 1/5. Its function is as follows. Catalyzes the transfer of succinyl-CoA to arginine to produce N(2)-succinylarginine. This chain is Arginine N-succinyltransferase, found in Escherichia coli O157:H7.